The primary structure comprises 252 residues: tRNA (guanine-N(7)-)-methyltransferase (252 aa).

S-adenosyl-L-methionine contacts are provided by Glu75, Glu100, Asp127, and Asp150. The active site involves Asp150. Residue Lys154 coordinates substrate. The segment at 156–161 (RHNKRR) is interaction with RNA. Substrate-binding positions include Asp186 and 223–226 (THFE).

This sequence belongs to the class I-like SAM-binding methyltransferase superfamily. TrmB family.

It carries out the reaction guanosine(46) in tRNA + S-adenosyl-L-methionine = N(7)-methylguanosine(46) in tRNA + S-adenosyl-L-homocysteine. It functions in the pathway tRNA modification; N(7)-methylguanine-tRNA biosynthesis. Its function is as follows. Catalyzes the formation of N(7)-methylguanine at position 46 (m7G46) in tRNA. The chain is tRNA (guanine-N(7)-)-methyltransferase from Xanthomonas oryzae pv. oryzae (strain MAFF 311018).